A 371-amino-acid polypeptide reads, in one-letter code: MSEISLIMLAAGNSTRFNTKVKKQFLRLGNDPLWLYATKNLSSFYPFKKIVVTSSNITYMKKFTKNYEFIEGGDTRAESLKKALELIDSEFVMVSDVARVLVSKNLFDRLIENLDKADCITPALKVADTTLFDNEALQREKIKLIQTPQISKTKLLKKALDQNLEFTDDSTAIAAMGGKIWFVEGEENARKLTFKEDLKKLDLPTPSFEIFTGNGFDVHEFGENRPLLLAGVQIHPTMGLKAHSDGDVLAHSLTDAILGAAGLGDIGELYPDTDMKFKNANSMELLKQAYDKVREVGFELINIDICVMAQSPKLKDFKQAMQSNIAHTLDLDEFRINVKATTTEKLGFIGRKEGMAVLSSVNLKYFDWTRL.

The tract at residues 1-210 is 2-C-methyl-D-erythritol 4-phosphate cytidylyltransferase; that stretch reads MSEISLIMLA…LDLPTPSFEI (210 aa). The interval 211-371 is 2-C-methyl-D-erythritol 2,4-cyclodiphosphate synthase; sequence FTGNGFDVHE…NLKYFDWTRL (161 aa). A divalent metal cation is bound by residues D217 and H219. 4-CDP-2-C-methyl-D-erythritol 2-phosphate-binding positions include 217 to 219 and 243 to 244; these read DVH and HS. A divalent metal cation is bound at residue H251. Residues 265-267, 270-274, 341-344, F348, and R351 contribute to the 4-CDP-2-C-methyl-D-erythritol 2-phosphate site; these read DIG, YPDTD, and TTTE.

It in the N-terminal section; belongs to the IspD/TarI cytidylyltransferase family. IspD subfamily. In the C-terminal section; belongs to the IspF family. It depends on a divalent metal cation as a cofactor.

The catalysed reaction is 2-C-methyl-D-erythritol 4-phosphate + CTP + H(+) = 4-CDP-2-C-methyl-D-erythritol + diphosphate. The enzyme catalyses 4-CDP-2-C-methyl-D-erythritol 2-phosphate = 2-C-methyl-D-erythritol 2,4-cyclic diphosphate + CMP. The protein operates within isoprenoid biosynthesis; isopentenyl diphosphate biosynthesis via DXP pathway; isopentenyl diphosphate from 1-deoxy-D-xylulose 5-phosphate: step 2/6. Its pathway is isoprenoid biosynthesis; isopentenyl diphosphate biosynthesis via DXP pathway; isopentenyl diphosphate from 1-deoxy-D-xylulose 5-phosphate: step 4/6. Bifunctional enzyme that catalyzes the formation of 4-diphosphocytidyl-2-C-methyl-D-erythritol from CTP and 2-C-methyl-D-erythritol 4-phosphate (MEP) (IspD), and catalyzes the conversion of 4-diphosphocytidyl-2-C-methyl-D-erythritol 2-phosphate (CDP-ME2P) to 2-C-methyl-D-erythritol 2,4-cyclodiphosphate (ME-CPP) with a corresponding release of cytidine 5-monophosphate (CMP) (IspF). The protein is Bifunctional enzyme IspD/IspF of Campylobacter jejuni subsp. jejuni serotype O:6 (strain 81116 / NCTC 11828).